Here is a 306-residue protein sequence, read N- to C-terminus: Lipid A biosynthesis palmitoleoyltransferase (306 aa).

A helical transmembrane segment spans residues 20–40; that stretch reads WFGLGVLWLWVQLPYPVLCFL. An HXXXXD motif motif is present at residues 132-137; sequence HFMSLE.

It belongs to the LpxL/LpxM/LpxP family. LpxP subfamily.

It localises to the cell inner membrane. It carries out the reaction (9Z)-hexadecenoyl-[ACP] + alpha-Kdo-(2-&gt;4)-alpha-Kdo-(2-&gt;6)-lipid IVA (E. coli) = (9Z)-hexadecenoyl-(Kdo)2-lipid IVA (E. coli) + holo-[ACP]. The protein operates within bacterial outer membrane biogenesis; lipopolysaccharide biosynthesis. Functionally, catalyzes the transfer of palmitoleate from palmitoleoyl-[acyl-carrier-protein] (ACP) to Kdo(2)-lipid IV(A) to form Kdo(2)-(palmitoleoyl)-lipid IV(A). Required for the biosynthesis of a distinct molecular species of lipid A, which is present only in cells grown at low temperatures. It may confer a selective advantage to cells growing at lower temperatures by making the outer membrane a more effective barrier to harmful chemicals. The sequence is that of Lipid A biosynthesis palmitoleoyltransferase from Escherichia coli (strain K12).